The sequence spans 718 residues: Mitochondrial potassium channel ATP-binding subunit (718 aa).

A mitochondrion-targeting transit peptide spans 1–25; that stretch reads MLVHLFRVGIRGGPFPGRLLPPLRF. 3 helical membrane passes run 128–148, 179–199, and 279–299; these read LLVL…NVQI, THLL…LVLL, and LLLM…GSGL. An ABC transmembrane type-1 domain is found at 133-420; it reads VAVVLALGAA…LSVLFGQVVR (288 aa). An ABC transporter domain is found at 455–692; that stretch reads VTFQNVCFSY…GGLYAELIRR (238 aa). 490–497 is a binding site for ATP; sequence GQSGGGKT. Residues 697–718 are disordered; sequence APRTAAPLPKKPEGPRNHQHKS.

Belongs to the ABC transporter superfamily. ABCB family. Multidrug resistance exporter (TC 3.A.1.201) subfamily. The mitochondrial potassium channel (mitoK(ATP)) is composed of 4 subunits of CCDC51/MITOK and 4 subunits of ABCB8/MITOSUR. Physically interacts with PAAT. Interacts with Neuropilin-1 (NRP1) in mitochondria.

Its subcellular location is the mitochondrion inner membrane. With respect to regulation, channel activity inhibited by ATP via ABCB8/MITOSUR subunit. Its function is as follows. ATP-binding subunit of the mitochondrial ATP-gated potassium channel (mitoK(ATP)). Together with pore-forming subunit CCDC51/MITOK of the mitoK(ATP) channel, mediates ATP-dependent potassium currents across the mitochondrial inner membrane. An increase in ATP intracellular levels closes the channel, inhibiting K(+) transport, whereas a decrease in ATP levels enhances K(+) uptake in the mitochondrial matrix. Plays a role in mitochondrial iron transport. Required for maintenance of normal cardiac function, possibly by influencing mitochondrial iron export and regulating the maturation of cytosolic iron sulfur cluster-containing enzymes. In Pongo abelii (Sumatran orangutan), this protein is Mitochondrial potassium channel ATP-binding subunit (ABCB8).